A 288-amino-acid polypeptide reads, in one-letter code: Syntaxin-1A (288 aa).

Over residues 1–13 the composition is skewed to basic and acidic residues; it reads MKDRTQELRTAKD. The interval 1–20 is disordered; the sequence is MKDRTQELRTAKDSDDDDDV. The Cytoplasmic segment spans residues 1–265; the sequence is MKDRTQELRT…KYQSKARRKK (265 aa). 3 positions are modified to phosphoserine: Ser14, Ser64, and Ser95. Residues 68 to 109 are a coiled coil; it reads DEKTKEELEELMSDIKKTANKVRSKLKSIEQSIEQEEGLNRS. The residue at position 188 (Ser188) is a Phosphoserine; by DAPK1. One can recognise a t-SNARE coiled-coil homology domain in the interval 192-254; that stretch reads LSEIETRHSE…ERAVSDTKKA (63 aa). Glycyl lysine isopeptide (Lys-Gly) (interchain with G-Cter in SUMO) cross-links involve residues Lys252, Lys253, and Lys256. Residues 266-286 traverse the membrane as a helical; Anchor for type IV membrane protein segment; the sequence is IMIIICCVILGIIIASTIGGI. The Extracellular segment spans residues 287 to 288; sequence FG.

Belongs to the syntaxin family. Part of the SNARE core complex containing SNAP25, VAMP2 and STX1A; this complex constitutes the basic catalytic machinery of the complex neurotransmitter release apparatus. The SNARE complex interacts with CPLX1. Interacts with STXBP1. The interaction with STXBP1 promotes assembly of the SNARE complex. Interacts (via C-terminus) with KCNB1 (via C-terminus); the interaction increases in a calcium-dependent manner and induces a pore-independent enhancement of exocytosis in neuroendocrine cells, chromaffin cells, pancreatic beta cells and from the soma of dorsal root ganglia (DRG) neurons. Interacts with SYTL4. Interacts with STXBP6. Interacts with PLCL1 (via C2 domain). Interacts with OTOF. Interacts with LGI3. Interacts (via the H3 domain) with SLC6A4 (via the N-terminus); this interaction regulates SLC4A6 channel conductance in thalamocortical neurons. Interacts with SYT6 and SYT8; the interaction is Ca(2+)-dependent. Interacts with VAMP8. Interacts with SNAP23. Interacts with VAPA and SYBU. Interacts with PRRT2. Interacts with SEPT8. Interacts with STXBP5L. Interacts with synaptotagmin-1/SYT1. Interacts with SEPTIN5; in the cerebellar cortex. Interacts with SEPTIN4; in the striatum. In terms of processing, phosphorylated by CK2. Phosphorylation at Ser-188 by DAPK1 significantly decreases its interaction with STXBP1. Post-translationally, phosphorylated by CK2. Phosphorylation at Ser-188 by DAPK1 significantly decreases its interaction with STXBP1. Sumoylated, sumoylation is required for regulation of synaptic vesicle endocytosis. Expressed in the striatum (at protein level). Expressed in the ileum.

The protein localises to the cytoplasmic vesicle. It is found in the secretory vesicle. It localises to the synaptic vesicle membrane. Its subcellular location is the synapse. The protein resides in the synaptosome. The protein localises to the cell membrane. Its function is as follows. Plays an essential role in hormone and neurotransmitter calcium-dependent exocytosis and endocytosis. Part of the SNARE (Soluble NSF Attachment Receptor) complex composed of SNAP25, STX1A and VAMP2 which mediates the fusion of synaptic vesicles with the presynaptic plasma membrane. STX1A and SNAP25 are localized on the plasma membrane while VAMP2 resides in synaptic vesicles. The pairing of the three SNAREs from the N-terminal SNARE motifs to the C-terminal anchors leads to the formation of the SNARE complex, which brings membranes into close proximity and results in final fusion. Participates in the calcium-dependent regulation of acrosomal exocytosis in sperm. Also plays an important role in the exocytosis of hormones such as insulin or glucagon-like peptide 1 (GLP-1). The sequence is that of Syntaxin-1A (Stx1a) from Mus musculus (Mouse).